Consider the following 430-residue polypeptide: MPYIKTINSLEVLDSRGNPTVEVEVITLSGAKGKTLVPSGASTGEHEAVELRDSDSKRYLGKGVLKAVENVATVIEPRLQNLSVLDQALIDQTLIQLDGTPNKSKLGANAILGVSLACARAAADYLGLELYEYIAGIAPKQMPVPMMNVINGGAHASNSVDFQEFMILPTGAPSFKEALRYGAEVFHHLGKILKQKGLPTTVGDEGGYAPDLNSNKEALQIILEAIQNAGYVPGKDIFLGMDVAASEFYDRETKKYLLASENNKTFSSEELVSYYEQLINKYPILSIEDGLDQNDWDGWKLLTQKLGQKVQLVGDDLFVTNTQKIQEGIDKQIANSVLIKLNQIGTLTETLEAIEMAKKASYTVVISHRSGETEDTTIADLAVAMNTGQIKTGSCSRTDRIAKYNQLLRIEKNMSNPSYLGLKVFYNLKK.

Gln163 provides a ligand contact to (2R)-2-phosphoglycerate. The active-site Proton donor is the Glu205. Positions 242, 288, and 315 each coordinate Mg(2+). 4 residues coordinate (2R)-2-phosphoglycerate: Lys340, Arg369, Ser370, and Lys391. The active-site Proton acceptor is the Lys340.

It belongs to the enolase family. It depends on Mg(2+) as a cofactor.

The protein localises to the cytoplasm. The protein resides in the secreted. Its subcellular location is the cell surface. The catalysed reaction is (2R)-2-phosphoglycerate = phosphoenolpyruvate + H2O. It functions in the pathway carbohydrate degradation; glycolysis; pyruvate from D-glyceraldehyde 3-phosphate: step 4/5. In terms of biological role, catalyzes the reversible conversion of 2-phosphoglycerate (2-PG) into phosphoenolpyruvate (PEP). It is essential for the degradation of carbohydrates via glycolysis. This chain is Enolase, found in Phytoplasma australiense.